We begin with the raw amino-acid sequence, 270 residues long: (+)-cis,cis-nepetalactol synthase NEPS3 (270 aa).

Residues Gly-21–Gly-27, Asp-46–Gln-48, Asp-70–Val-71, Asn-97, Tyr-165–Lys-169, and Val-198–Leu-202 each bind NAD(+).

Belongs to the short-chain dehydrogenases/reductases (SDR) family. Forms homotetramers.

It carries out the reaction (S)-8-oxocitronellyl enol = cis-cis-nepetalactol. Functionally, functions as a non-oxidoreductive cyclase to promote the formation of cis-cis-nepetalactol. Cis-cis-nepetalactol is then oxidized by NEPS1 into cis-cis-nepetalactone, which belongs to a family of metabolites that are both insect-repellent and have euphoric effect in cats. Binds NAD(+) as classical short-chain dehydrogenase/reductase (SDR), but does not utilize it for its redox-neutral cyclase activity. The chain is (+)-cis,cis-nepetalactol synthase NEPS3 from Nepeta racemosa (Catmint).